Reading from the N-terminus, the 279-residue chain is MRPAIKIGIIGGSGLDDSQILESRSEKVVSTHFGNPSDVLIEGKIAGVDCVLLARHGRNHSIMPSNVNYRANIWALKTVGCTHVIVSTATGSLQERIHPGDLVIPDNFIDRTTKRAQTFYDGNDMLVGVCHVPMEPAFCSRTREVLIETAKELGLVGVHNKGTVVTIEGPRFSSKAESNLFRQWGADLVNMTLVPEVVLAKEAGLCYAAIAMATDYDCWRDCGENVNVADVMATFKKNVTKVTQLITAVIPKIAEMDWTETIGELTKTVNGSIMLPHAY.

Phosphate-binding positions include Ser13, 55 to 56 (RH), and 88 to 89 (TA). Met191 serves as a coordination point for substrate. Position 192 (Thr192) interacts with phosphate. 215-217 (DYD) contributes to the substrate binding site.

It belongs to the PNP/MTAP phosphorylase family. MTAP subfamily. As to quaternary structure, homotrimer.

The protein localises to the cytoplasm. The protein resides in the nucleus. It catalyses the reaction S-methyl-5'-thioadenosine + phosphate = 5-(methylsulfanyl)-alpha-D-ribose 1-phosphate + adenine. It participates in amino-acid biosynthesis; L-methionine biosynthesis via salvage pathway; S-methyl-5-thio-alpha-D-ribose 1-phosphate from S-methyl-5'-thioadenosine (phosphorylase route): step 1/1. In terms of biological role, catalyzes the reversible phosphorylation of S-methyl-5'-thioadenosine (MTA) to adenine and 5-methylthioribose-1-phosphate. Involved in the breakdown of MTA, a major by-product of polyamine biosynthesis. Responsible for the first step in the methionine salvage pathway after MTA has been generated from S-adenosylmethionine. Has broad substrate specificity with 6-aminopurine nucleosides as preferred substrates. This is S-methyl-5'-thioadenosine phosphorylase from Aedes aegypti (Yellowfever mosquito).